Consider the following 362-residue polypeptide: Phosphoserine aminotransferase (362 aa).

Ser9 and Arg42 together coordinate L-glutamate. Pyridoxal 5'-phosphate-binding positions include 76–77 (GR), Trp102, Thr153, Asp174, and Gln197. Lys198 bears the N6-(pyridoxal phosphate)lysine mark. 239–240 (NT) provides a ligand contact to pyridoxal 5'-phosphate.

Belongs to the class-V pyridoxal-phosphate-dependent aminotransferase family. SerC subfamily. Homodimer. The cofactor is pyridoxal 5'-phosphate.

It is found in the cytoplasm. The catalysed reaction is O-phospho-L-serine + 2-oxoglutarate = 3-phosphooxypyruvate + L-glutamate. It carries out the reaction 4-(phosphooxy)-L-threonine + 2-oxoglutarate = (R)-3-hydroxy-2-oxo-4-phosphooxybutanoate + L-glutamate. The protein operates within amino-acid biosynthesis; L-serine biosynthesis; L-serine from 3-phospho-D-glycerate: step 2/3. It functions in the pathway cofactor biosynthesis; pyridoxine 5'-phosphate biosynthesis; pyridoxine 5'-phosphate from D-erythrose 4-phosphate: step 3/5. In terms of biological role, catalyzes the reversible conversion of 3-phosphohydroxypyruvate to phosphoserine and of 3-hydroxy-2-oxo-4-phosphonooxybutanoate to phosphohydroxythreonine. The chain is Phosphoserine aminotransferase from Salmonella newport (strain SL254).